Consider the following 193-residue polypeptide: Guanylate kinase (193 aa).

A Guanylate kinase-like domain is found at 12-191 (DLLTIVAGPT…AANELWLAMN (180 aa)). 19 to 26 (GPTAVGKG) is an ATP binding site.

It belongs to the guanylate kinase family.

The protein resides in the cytoplasm. The enzyme catalyses GMP + ATP = GDP + ADP. Essential for recycling GMP and indirectly, cGMP. This is Guanylate kinase from Tropheryma whipplei (strain TW08/27) (Whipple's bacillus).